The following is a 365-amino-acid chain: Fructose-1,6-bisphosphate aldolase/phosphatase (365 aa).

D11 functions as the Proton acceptor; for FBP phosphatase activity in the catalytic mechanism. Mg(2+) contacts are provided by D11, H18, D52, and D53. Beta-D-fructose 1,6-bisphosphate is bound at residue H18. H18 contributes to the dihydroxyacetone phosphate binding site. Beta-D-fructose 1,6-bisphosphate is bound at residue Y90. Mg(2+) is bound at residue Q94. 103–104 (GN) serves as a coordination point for beta-D-fructose 1,6-bisphosphate. D131 is a binding site for Mg(2+). K132 is a binding site for beta-D-fructose 1,6-bisphosphate. Residue K132 participates in dihydroxyacetone phosphate binding. The active-site Proton donor/acceptor; for FBP aldolase activity is the Y228. The Mg(2+) site is built by K231, D232, and D233. K231 functions as the Schiff-base intermediate with DHAP; for FBP aldolase activity in the catalytic mechanism. Beta-D-fructose 1,6-bisphosphate contacts are provided by residues 241 to 242 (QS), R265, D286, and Y347. Dihydroxyacetone phosphate-binding residues include R265 and D286.

The protein belongs to the FBP aldolase/phosphatase family. Homooctamer; dimer of tetramers. Requires Mg(2+) as cofactor.

The catalysed reaction is beta-D-fructose 1,6-bisphosphate + H2O = beta-D-fructose 6-phosphate + phosphate. The enzyme catalyses beta-D-fructose 1,6-bisphosphate = D-glyceraldehyde 3-phosphate + dihydroxyacetone phosphate. It participates in carbohydrate biosynthesis; gluconeogenesis. Catalyzes two subsequent steps in gluconeogenesis: the aldol condensation of dihydroxyacetone phosphate (DHAP) and glyceraldehyde-3-phosphate (GA3P) to fructose-1,6-bisphosphate (FBP), and the dephosphorylation of FBP to fructose-6-phosphate (F6P). This Methanothermobacter marburgensis (strain ATCC BAA-927 / DSM 2133 / JCM 14651 / NBRC 100331 / OCM 82 / Marburg) (Methanobacterium thermoautotrophicum) protein is Fructose-1,6-bisphosphate aldolase/phosphatase.